We begin with the raw amino-acid sequence, 901 residues long: Phosphatidylinositol 3-kinase catalytic subunit type 3 (901 aa).

A C2 PI3K-type domain is found at 21–189; sequence LQTNVQVKVA…DLLFKQVTRQ (169 aa). A PIK helical domain is found at 302–527; it reads RHRQVKPNKQ…SKMYQNIQDR (226 aa). A PI3K/PI4K catalytic domain is found at 607–886; sequence IPDTASFFKS…QIESSLNAKM (280 aa). Residues 613–619 form a G-loop region; it reads FFKSEMM. The tract at residues 755–763 is catalytic loop; that stretch reads GLGDRHLDN. Positions 774-795 are activation loop; the sequence is HVDFGFILGRDPKPMPPPMKLT.

It belongs to the PI3/PI4-kinase family. In terms of assembly, interacts with bec-1. May interact with dyn-1. It depends on Mn(2+) as a cofactor. Ubiquitous.

Its subcellular location is the nucleus outer membrane. It is found in the cytoplasm. The protein localises to the cytoplasmic granule. It localises to the cell projection. The protein resides in the phagocytic cup. It carries out the reaction a 1,2-diacyl-sn-glycero-3-phospho-(1D-myo-inositol) + ATP = a 1,2-diacyl-sn-glycero-3-phospho-(1D-myo-inositol-3-phosphate) + ADP + H(+). Its activity is regulated as follows. Inhibited by wortmannin. Catalytic subunit of the PI3K complex that mediates formation of phosphatidylinositol 3-phosphate. Together with bec-1, mediates the production of phosphatidylinositol 3-phosphate on intracellular vesicles and thereby regulates membrane trafficking. Plays a role in endosome-to-Golgi retrograde transport of mig-14. Involved in clearance of apoptotic cell corpses by phagosomes. Phagosome maturation requires two sequential and non-overlapping pulses of phosphatidylinositol-3-phosphate (PI3P) on the vesicle surface which mediates recruitment of sortins snx-1 and lst-4 and small GTPases rab-5, rab-2 and rab-7, downstream of dynamin dyn-1. The first pulse is initiated by piki-1, then maintained by vps-34 which also produces the second pulse. Required for embryonic development. Together with bec-1, involved in L3/L4 larval molting stage probably by regulating cuticle shedding. Regulates the expansion of the nucleus outer membrane. Involved in the secretion and localization of lrp-1 at the apical surface of hyp7 syncytium. May regulate endocytosis in hypodermal cells. May play a role in the formation of gut granules (a lysosome-related organelle). Plays a role in germ stem cell proliferation during larval development. The protein is Phosphatidylinositol 3-kinase catalytic subunit type 3 of Caenorhabditis elegans.